The following is a 349-amino-acid chain: MTAFENLTWLHGKPQGNGLLKANPEDFVVVEDLGFEPDGEGEHILVRILKNGCNTRFVADALAKFLKIHAREVSFAGQKDKHAVTEQWLCARVPGNAMPDLSQFELEGCKVLEYARHKRKLRLGALQGNAFTLILRDVTDRDDVEKRLAAIAEQGVPNYFGAQRFGIGGSNLLGALRWAQSDAPVRDRNKRSFWLSAARSALFNQIVSERLKKPDANQVVVGDALQLAGRGSWFVATAEEITDVQTRVDNKTLMITAAMPGSGEWGTQADALAAEQAAIADAPELQSLLMREKVEAARRAMLLYPQKLSWNWWDDVTVELRFWLPAGSFATSVVRELINTSGDYANIAE.

Residue Phe27 participates in substrate binding. Asp80 (nucleophile) is an active-site residue. Asn129 is a substrate binding site. The 149-residue stretch at Gly155–Leu303 folds into the TRUD domain. Phe329 contributes to the substrate binding site.

It belongs to the pseudouridine synthase TruD family.

It carries out the reaction uridine(13) in tRNA = pseudouridine(13) in tRNA. In terms of biological role, responsible for synthesis of pseudouridine from uracil-13 in transfer RNAs. The chain is tRNA pseudouridine synthase D from Enterobacter sp. (strain 638).